We begin with the raw amino-acid sequence, 251 residues long: Ubiquinone/menaquinone biosynthesis C-methyltransferase UbiE (251 aa).

Residues threonine 74, aspartate 95, 123–124 (NA), and serine 140 each bind S-adenosyl-L-methionine.

The protein belongs to the class I-like SAM-binding methyltransferase superfamily. MenG/UbiE family.

It carries out the reaction a 2-demethylmenaquinol + S-adenosyl-L-methionine = a menaquinol + S-adenosyl-L-homocysteine + H(+). The enzyme catalyses a 2-methoxy-6-(all-trans-polyprenyl)benzene-1,4-diol + S-adenosyl-L-methionine = a 5-methoxy-2-methyl-3-(all-trans-polyprenyl)benzene-1,4-diol + S-adenosyl-L-homocysteine + H(+). Its pathway is quinol/quinone metabolism; menaquinone biosynthesis; menaquinol from 1,4-dihydroxy-2-naphthoate: step 2/2. It participates in cofactor biosynthesis; ubiquinone biosynthesis. In terms of biological role, methyltransferase required for the conversion of demethylmenaquinol (DMKH2) to menaquinol (MKH2) and the conversion of 2-polyprenyl-6-methoxy-1,4-benzoquinol (DDMQH2) to 2-polyprenyl-3-methyl-6-methoxy-1,4-benzoquinol (DMQH2). This chain is Ubiquinone/menaquinone biosynthesis C-methyltransferase UbiE, found in Pectobacterium atrosepticum (strain SCRI 1043 / ATCC BAA-672) (Erwinia carotovora subsp. atroseptica).